Consider the following 504-residue polypeptide: WD repeat-containing protein 55 homolog (504 aa).

Disordered stretches follow at residues 1–21 (MDRH…DIDD) and 33–132 (QEVL…DDDD). Acidic residues-rich tracts occupy residues 12-21 (NEDELDDIDD) and 33-48 (QEVL…EYDL). The span at 63–74 (SSSNESISSDGS) shows a compositional bias: low complexity. The span at 78-89 (NAEDSDSDDSMI) shows a compositional bias: acidic residues. 6 WD repeats span residues 156–195 (KLED…NKLL), 200–239 (VHAK…LKKL), 243–281 (AHDD…AIFE), 284–323 (EVED…LYVQ), 326–365 (PYEE…YHCD), and 410–449 (QHNM…DFGD). Positions 477 to 504 (FFADMTKDQDDDDNDGGNDTAAGPSNVT) are disordered.

The protein belongs to the WD repeat WDR55 family.

In Drosophila virilis (Fruit fly), this protein is WD repeat-containing protein 55 homolog.